The sequence spans 351 residues: Hydroxymethylglutaryl-CoA synthase (351 aa).

The active-site Proton donor/acceptor is Glu80. The Acyl-thioester intermediate role is filled by Cys112. Cys112 and Ser153 together coordinate (3S)-3-hydroxy-3-methylglutaryl-CoA. Arg199 is a binding site for CoA. (3S)-3-hydroxy-3-methylglutaryl-CoA contacts are provided by Thr201 and His234. The active-site Proton donor/acceptor is His234. Position 239 (Lys239) interacts with CoA. (3S)-3-hydroxy-3-methylglutaryl-CoA-binding residues include Arg243, Asn266, and Ser296.

This sequence belongs to the thiolase-like superfamily. Archaeal HMG-CoA synthase family. As to quaternary structure, interacts with acetoacetyl-CoA thiolase that catalyzes the precedent step in the pathway and with a DUF35 protein. The acetoacetyl-CoA thiolase/HMG-CoA synthase complex channels the intermediate via a fused CoA-binding site, which allows for efficient coupling of the endergonic thiolase reaction with the exergonic HMGCS reaction.

The enzyme catalyses acetoacetyl-CoA + acetyl-CoA + H2O = (3S)-3-hydroxy-3-methylglutaryl-CoA + CoA + H(+). It functions in the pathway metabolic intermediate biosynthesis; (R)-mevalonate biosynthesis; (R)-mevalonate from acetyl-CoA: step 2/3. Catalyzes the condensation of acetyl-CoA with acetoacetyl-CoA to form 3-hydroxy-3-methylglutaryl-CoA (HMG-CoA). Functions in the mevalonate (MVA) pathway leading to isopentenyl diphosphate (IPP), a key precursor for the biosynthesis of isoprenoid compounds that are building blocks of archaeal membrane lipids. This Thermoplasma acidophilum (strain ATCC 25905 / DSM 1728 / JCM 9062 / NBRC 15155 / AMRC-C165) protein is Hydroxymethylglutaryl-CoA synthase.